The sequence spans 182 residues: Troponin I, fast skeletal muscle (182 aa).

Gly-2 is subject to N-acetylglycine. An involved in binding TNC region spans residues 2-48 (GDEEKRNRAITARRQHLKSVMLQIAATELEKEESRRESEKQNYLSEH). Phosphothreonine is present on Thr-12. Basic and acidic residues predominate over residues 29–41 (ELEKEESRRESEK). Residues 29-53 (ELEKEESRRESEKQNYLSEHCPPLH) form a disordered region. Residues 97 to 117 (NQKLFDLRGKFKRPPLRRVRM) form an involved in binding TNC and actin region. Ser-118 carries the post-translational modification Phosphoserine.

Belongs to the troponin I family. As to quaternary structure, binds to actin and tropomyosin.

Its function is as follows. Troponin I is the inhibitory subunit of troponin, the thin filament regulatory complex which confers calcium-sensitivity to striated muscle actomyosin ATPase activity. This Rattus norvegicus (Rat) protein is Troponin I, fast skeletal muscle (Tnni2).